We begin with the raw amino-acid sequence, 86 residues long: Large ribosomal subunit protein bL27 (86 aa).

The interval 1–22 (MATKKAGGSSRNGRDSAGRRLG) is disordered.

The protein belongs to the bacterial ribosomal protein bL27 family.

The chain is Large ribosomal subunit protein bL27 from Rickettsia peacockii (strain Rustic).